The sequence spans 1068 residues: Sucrose-phosphate synthase (1068 aa).

Disordered regions lie at residues H18–M47 and K118–E139. The segment covering G23–D32 has biased composition (gly residues). Positions K118 to T128 are enriched in basic and acidic residues.

The protein belongs to the glycosyltransferase 1 family. In terms of assembly, homodimer or homotetramer.

It catalyses the reaction beta-D-fructose 6-phosphate + UDP-alpha-D-glucose = sucrose 6(F)-phosphate + UDP + H(+). The protein operates within glycan biosynthesis; sucrose biosynthesis; sucrose from D-fructose 6-phosphate and UDP-alpha-D-glucose: step 1/2. Activity is regulated by phosphorylation and moderated by concentration of metabolites and light. Plays a role in photosynthetic sucrose synthesis by catalyzing the rate-limiting step of sucrose biosynthesis from UDP-glucose and fructose- 6-phosphate. Involved in the regulation of carbon partitioning in the leaves of plants. May regulate the synthesis of sucrose and therefore play a major role as a limiting factor in the export of photoassimilates out of the leaf. Plays a role for sucrose availability that is essential for plant growth and fiber elongation. The sequence is that of Sucrose-phosphate synthase from Zea mays (Maize).